Consider the following 420-residue polypeptide: Acetyl-CoA acetyltransferase B, mitochondrial (420 aa).

Residues 1-33 (MAFCGPRTAARLSHSTRALHYTHRSFASPRTLN) constitute a mitochondrion transit peptide. C119 functions as the Acyl-thioester intermediate in the catalytic mechanism. CoA is bound by residues Y212, 251–253 (RVD), and K256. Y212 lines the K(+) pocket. The K(+) site is built by A273 and A274. S277 contacts CoA. V374 contributes to the K(+) binding site. Residue C406 is the Proton donor/acceptor of the active site.

It belongs to the thiolase-like superfamily. Thiolase family. As to quaternary structure, homotetramer.

It is found in the mitochondrion. It catalyses the reaction 2 acetyl-CoA = acetoacetyl-CoA + CoA. The enzyme catalyses propanoyl-CoA + acetyl-CoA = 2-methyl-3-oxobutanoyl-CoA + CoA. It functions in the pathway lipid metabolism; fatty acid beta-oxidation. This is one of the enzymes that catalyzes the last step of the mitochondrial beta-oxidation pathway, an aerobic process breaking down fatty acids into acetyl-CoA. Using free coenzyme A/CoA, catalyzes the thiolytic cleavage of medium- to long-chain 3-oxoacyl-CoAs into acetyl-CoA and a fatty acyl-CoA shortened by two carbon atoms. The activity of the enzyme is reversible and it can also catalyze the condensation of two acetyl-CoA molecules into acetoacetyl-CoA. Thereby, it plays a major role in ketone body metabolism. This Xenopus laevis (African clawed frog) protein is Acetyl-CoA acetyltransferase B, mitochondrial (acat1-b).